A 178-amino-acid polypeptide reads, in one-letter code: C-phycoerythrin class 2 subunit beta (178 aa).

2 residues coordinate phycourobilin: C50 and C61. (2R,3E)-phycoerythrobilin contacts are provided by C82 and C159.

This sequence belongs to the phycobiliprotein family. As to quaternary structure, heterodimer of an alpha and a beta chain. In terms of processing, contains two covalently linked phycoerythrobilin chromophores and one covalently linked phycourobilin chromophore.

Its subcellular location is the cellular thylakoid membrane. Functionally, light-harvesting photosynthetic bile pigment-protein from the phycobiliprotein complex. The protein is C-phycoerythrin class 2 subunit beta (mpeB) of Synechococcus sp. (strain WH8103).